Here is a 663-residue protein sequence, read N- to C-terminus: 4-hydroxy-3-methylbut-2-en-1-yl diphosphate synthase (flavodoxin) (663 aa).

4 residues coordinate [4Fe-4S] cluster: C568, C571, C602, and E609.

The protein belongs to the IspG family. [4Fe-4S] cluster serves as cofactor.

It catalyses the reaction (2E)-4-hydroxy-3-methylbut-2-enyl diphosphate + oxidized [flavodoxin] + H2O + 2 H(+) = 2-C-methyl-D-erythritol 2,4-cyclic diphosphate + reduced [flavodoxin]. It functions in the pathway isoprenoid biosynthesis; isopentenyl diphosphate biosynthesis via DXP pathway; isopentenyl diphosphate from 1-deoxy-D-xylulose 5-phosphate: step 5/6. In terms of biological role, converts 2C-methyl-D-erythritol 2,4-cyclodiphosphate (ME-2,4cPP) into 1-hydroxy-2-methyl-2-(E)-butenyl 4-diphosphate. The sequence is that of 4-hydroxy-3-methylbut-2-en-1-yl diphosphate synthase (flavodoxin) from Leptospira borgpetersenii serovar Hardjo-bovis (strain JB197).